The primary structure comprises 106 residues: U1-lycotoxin-Ls1b (106 aa).

The N-terminal stretch at 1 to 19 is a signal peptide; the sequence is MKVLVVVALLVTLISYSSS. Positions 20–40 are excised as a propeptide; that stretch reads EGIDDPEADELLSLMANEQTR. Cystine bridges form between Cys43–Cys58, Cys50–Cys67, Cys57–Cys85, and Cys69–Cys83.

This sequence belongs to the neurotoxin 19 (CSTX) family. 04 (U1-Lctx) subfamily. As to expression, expressed by the venom gland.

The protein localises to the secreted. In Lycosa singoriensis (Wolf spider), this protein is U1-lycotoxin-Ls1b.